The primary structure comprises 317 residues: Peptidyl-prolyl cis-trans isomerase CYP26-2, chloroplastic (317 aa).

The interval 1-37 (MMQPNAKLLSPSAKFLPSPIEPPQHNRRTTVGAPPSL) is disordered. Residues 95–311 (FIDVSIDGEP…SKVVVTNCGL (217 aa)) enclose the PPIase cyclophilin-type domain.

This sequence belongs to the cyclophilin-type PPIase family. In terms of tissue distribution, ubiquitous. Lower levels of expression in roots.

It localises to the plastid. Its subcellular location is the chloroplast thylakoid. It catalyses the reaction [protein]-peptidylproline (omega=180) = [protein]-peptidylproline (omega=0). Functionally, PPIases accelerate the folding of proteins. It catalyzes the cis-trans isomerization of proline imidic peptide bonds in oligopeptides. The chain is Peptidyl-prolyl cis-trans isomerase CYP26-2, chloroplastic (CYP26-2) from Arabidopsis thaliana (Mouse-ear cress).